Reading from the N-terminus, the 300-residue chain is ATP-dependent (S)-NAD(P)H-hydrate dehydratase (300 aa).

Residues 14–293 (LLALFKTVVP…NQIPSVFQTE (280 aa)) enclose the YjeF C-terminal domain. (6S)-NADPHX contacts are provided by residues G114 and 167-173 (NVMEFQR). ATP is bound by residues 198–202 (KGAND) and 219–228 (GSGRRCGGQG). Position 229 (D229) interacts with (6S)-NADPHX.

It belongs to the NnrD/CARKD family. Mg(2+) serves as cofactor.

It carries out the reaction (6S)-NADHX + ATP = ADP + phosphate + NADH + H(+). The enzyme catalyses (6S)-NADPHX + ATP = ADP + phosphate + NADPH + H(+). Catalyzes the dehydration of the S-form of NAD(P)HX at the expense of ATP, which is converted to ADP. Together with NAD(P)HX epimerase, which catalyzes the epimerization of the S- and R-forms, the enzyme allows the repair of both epimers of NAD(P)HX, a damaged form of NAD(P)H that is a result of enzymatic or heat-dependent hydration. The protein is ATP-dependent (S)-NAD(P)H-hydrate dehydratase of Drosophila melanogaster (Fruit fly).